We begin with the raw amino-acid sequence, 2240 residues long: Nonribisomal peptide synthetase notE (2240 aa).

The segment at 22–52 (TETMRETLSSSSSPLSLSSITSPLSSASEPP) is disordered. A compositionally biased stretch (low complexity) spans 28-52 (TLSSSSSPLSLSSITSPLSSASEPP). An adenylation 1 region spans residues 85–484 (QQRCREAPES…GRKEGQVKIR (400 aa)). A Carrier 1 domain is found at 616–692 (PPTTATEHAL…EQARKATPVS (77 aa)). At Ser-653 the chain carries O-(pantetheine 4'-phosphoryl)serine. Residues 732 to 1144 (EDIFPCTPLQ…DFASPQDRDL (413 aa)) are condensation 1. The adenylation 2 stretch occupies residues 1167–1564 (QEARQPSREA…GRRDTQLKLR (398 aa)). Residues 1700-1776 (PVSRGPELRL…ELARCTGEEP (77 aa)) form the Carrier 2 domain. Ser-1737 carries the O-(pantetheine 4'-phosphoryl)serine modification. The tract at residues 1845-2159 (FSFHGEVSVE…ILQHQNIDMD (315 aa)) is condensation 2. The interval 2008 to 2027 (CTMPVKATPPTDSDDSRPSA) is disordered.

It belongs to the NRP synthetase family.

The catalysed reaction is L-proline + L-tryptophan + 2 ATP = brevianamide F + 2 AMP + 2 diphosphate + 2 H(+). It participates in alkaloid biosynthesis. Functionally, nonribisomal peptide synthetase; part of the gene cluster that mediates the biosynthesis of notoamide, a fungal indole alkaloid that belongs to a family of natural products containing a characteristic bicyclo[2.2.2]diazaoctane core. The first step of notoamide biosynthesis involves coupling of L-proline and L-tryptophan by the bimodular NRPS notE, to produce cyclo-L-tryptophan-L-proline called brevianamide F. The reverse prenyltransferase notF then acts as a deoxybrevianamide E synthase and converts brevianamide F to deoxybrevianamide E via reverse prenylation at C-2 of the indole ring leading to the bicyclo[2.2.2]diazaoctane core. Deoxybrevianamide E is further hydroxylated at C-6 of the indole ring, likely catalyzed by the cytochrome P450 monooxygenase notG, to yield 6-hydroxy-deoxybrevianamide E. 6-hydroxy-deoxybrevianamide E is a specific substrate of the prenyltransferase notC for normal prenylation at C-7 to produce 6-hydroxy-7-prenyl-deoxybrevianamide, also called notoamide S. As the proposed pivotal branching point in notoamide biosynthesis, notoamide S can be diverted to notoamide E through an oxidative pyran ring closure putatively catalyzed by either notH cytochrome P450 monooxygenase or the notD FAD-linked oxidoreductase. This step would be followed by an indole 2,3-epoxidation-initiated pinacol-like rearrangement catalyzed by the notB FAD-dependent monooxygenase leading to the formation of notoamide C and notoamide D. On the other hand notoamide S is converted to notoamide T by notH (or notD), a bifunctional oxidase that also functions as the intramolecular Diels-Alderase responsible for generation of (+)-notoamide T. To generate antipodal (-)-notoaminide T, notH' (or notD') in Aspergillus versicolor is expected to catalyze a Diels-Alder reaction leading to the opposite stereochemistry. The remaining oxidoreductase notD (or notH) likely catalyzes the oxidative pyran ring formation to yield (+)-stephacidin A. The FAD-dependent monooxygenase notI is highly similar to notB and is predicted to catalyze a similar conversion from (+)-stephacidin A to (-)-notoamide B via the 2,3-epoxidation of (+)-stephacidin A followed by a pinacol-type rearrangement. Finally, it remains unclear which enzyme could be responsible for the final hydroxylation steps leading to notoamide A and sclerotiamide. The polypeptide is Nonribisomal peptide synthetase notE (Aspergillus sp. (strain MF297-2)).